A 328-amino-acid polypeptide reads, in one-letter code: Tetraacyldisaccharide 4'-kinase (328 aa).

55-62 lines the ATP pocket; sequence TAGGNGKT.

The protein belongs to the LpxK family.

It carries out the reaction a lipid A disaccharide + ATP = a lipid IVA + ADP + H(+). It functions in the pathway glycolipid biosynthesis; lipid IV(A) biosynthesis; lipid IV(A) from (3R)-3-hydroxytetradecanoyl-[acyl-carrier-protein] and UDP-N-acetyl-alpha-D-glucosamine: step 6/6. Its function is as follows. Transfers the gamma-phosphate of ATP to the 4'-position of a tetraacyldisaccharide 1-phosphate intermediate (termed DS-1-P) to form tetraacyldisaccharide 1,4'-bis-phosphate (lipid IVA). The protein is Tetraacyldisaccharide 4'-kinase of Shigella boydii serotype 18 (strain CDC 3083-94 / BS512).